Consider the following 346-residue polypeptide: NADP-dependent alcohol dehydrogenase C (346 aa).

Zn(2+) contacts are provided by C41, H63, C94, C97, C100, C108, and C158.

Belongs to the zinc-containing alcohol dehydrogenase family. Zn(2+) is required as a cofactor.

It carries out the reaction a primary alcohol + NADP(+) = an aldehyde + NADPH + H(+). The protein is NADP-dependent alcohol dehydrogenase C (adhC) of Mycobacterium bovis (strain ATCC BAA-935 / AF2122/97).